Here is a 596-residue protein sequence, read N- to C-terminus: Fructan 1-exohydrolase (596 aa).

Positions 1 to 20 (MAQAWAFLLPVLVLGSYVTS) are cleaved as a signal peptide. Asp-75 is a catalytic residue. N-linked (GlcNAc...) asparagine glycosylation is found at Asn-168, Asn-236, and Asn-248. Cys-446 and Cys-492 are joined by a disulfide. Asn-567 is a glycosylation site (N-linked (GlcNAc...) asparagine).

It belongs to the glycosyl hydrolase 32 family.

It catalyses the reaction Hydrolysis of terminal, non-reducing (2-&gt;1)-linked beta-D-fructofuranose residues in fructans.. Inhibited by sucrose. Its function is as follows. Hydrolyzes inulin-type beta-(2,1)-fructans. May play a role as a beta-(2,1)-trimmer during graminan biosynthesis. This is Fructan 1-exohydrolase from Aegilops tauschii (Tausch's goatgrass).